We begin with the raw amino-acid sequence, 99 residues long: Putative membrane protein insertion efficiency factor (99 aa).

Belongs to the UPF0161 family.

It is found in the cell inner membrane. Could be involved in insertion of integral membrane proteins into the membrane. This Salinibacter ruber (strain DSM 13855 / M31) protein is Putative membrane protein insertion efficiency factor.